The following is a 499-amino-acid chain: Phenylalanine--tRNA ligase alpha subunit B (499 aa).

L-phenylalanine-binding positions include Thr330, 373–375 (QIE), and Tyr413. Glu415 serves as a coordination point for Mg(2+). Phe439 contributes to the L-phenylalanine binding site.

The protein belongs to the class-II aminoacyl-tRNA synthetase family. Phe-tRNA synthetase alpha subunit type 2 subfamily. In terms of assembly, heterotetramer; dimer of two heterodimers formed by alpha and beta subunits. It depends on Mg(2+) as a cofactor.

The protein resides in the cytoplasm. It catalyses the reaction tRNA(Phe) + L-phenylalanine + ATP = L-phenylalanyl-tRNA(Phe) + AMP + diphosphate + H(+). The protein is Phenylalanine--tRNA ligase alpha subunit B (farsa-b) of Xenopus laevis (African clawed frog).